A 506-amino-acid polypeptide reads, in one-letter code: Maturase K (506 aa).

It belongs to the intron maturase 2 family. MatK subfamily.

It is found in the plastid. The protein resides in the chloroplast. Usually encoded in the trnK tRNA gene intron. Probably assists in splicing its own and other chloroplast group II introns. This is Maturase K from Phyllodoce caerulea (Blue mountain heath).